A 213-amino-acid chain; its full sequence is Ras-related protein Rab-39B (213 aa).

Positions 17, 20, 21, 22, 23, 37, and 40 each coordinate GTP. Residue S22 coordinates Mg(2+). Residues 35-43 (QVSDPTVGV) form a switch-I region. Mg(2+)-binding residues include T40 and D64. Residues G67, H123, K124, D126, A154, and R155 each contribute to the GTP site. Residues 67 to 83 (GQERFRSITRAYYRNSV) form a switch-II region. Residue S201 is modified to Phosphoserine. 2 S-geranylgeranyl cysteine lipidation sites follow: C211 and C213. Residue C213 is modified to Cysteine methyl ester.

It belongs to the small GTPase superfamily. Rab family. As to quaternary structure, interacts (GDP-bound) with C9orf72; C9orf72 in complex with SMCR8 acts as a GEF for RAB39B. Interacts (in GTP-bound form) with PICK1 (via PDZ domain); a PICK1 homodimer may allow simultaneous association of RAB39B and GRIA2 to PICK1 which is involved in GRIA2 trafficking. Interacts with isoform c of RASSF1; the interaction is strong. Interacts with isoform a of RASSF1; the interaction is weak. Interacts with the DLG4/PSD-95. Interacts (GTP-bound) with HOPS complex components VPS39 and VPS41. Mg(2+) is required as a cofactor.

Its subcellular location is the cell membrane. It localises to the cytoplasmic vesicle membrane. It is found in the golgi apparatus. The protein resides in the cytoplasmic vesicle. The protein localises to the autophagosome membrane. Its subcellular location is the autolysosome membrane. It catalyses the reaction GTP + H2O = GDP + phosphate + H(+). Its activity is regulated as follows. Regulated by guanine nucleotide exchange factors (GEFs) including C9orf72-SMCR8 complex, which promote the exchange of bound GDP for free GTP. Regulated by GTPase activating proteins (GAPs) which increase the GTP hydrolysis activity. Inhibited by GDP dissociation inhibitors (GDIs). Its function is as follows. The small GTPases Rab are key regulators of intracellular membrane trafficking, from the formation of transport vesicles to their fusion with membranes. Rabs cycle between an inactive GDP-bound form and an active GTP-bound form that is able to recruit to membranes different sets of downstream effectors directly responsible for vesicle formation, movement, tethering and fusion. RAB39B is involved in autophagy and may function in autophagosome formation. Binds downstream effector PICK1 to ensure selectively GRIA2 exit from the endoplasmic reticulum to the Golgi and to regulate AMPAR composition at the post-synapses and thus synaptic transmission. May regulate the homeostasis of SNCA/alpha-synuclein. The sequence is that of Ras-related protein Rab-39B (RAB39B) from Bos taurus (Bovine).